Reading from the N-terminus, the 226-residue chain is Late protein I226R (226 aa).

Positions 1–16 are cleaved as a signal peptide; it reads MKMETFLVCLFHNADG. Residues Asn142 and Asn164 are each glycosylated (N-linked (GlcNAc...) asparagine; by host).

Belongs to the asfivirus I226R family.

Plays a role in the inhibition of host NF-kappa-B and IRF3 signaling pathways. Mechanistically, promotes the degradation of host IKBKG through enhancing its ubiquitination leading to inhibition of both pathways. The sequence is that of Late protein I226R from African swine fever virus (isolate Warthog/Namibia/Wart80/1980) (ASFV).